Consider the following 172-residue polypeptide: Trypsin inhibitor DE-3 (172 aa).

2 disulfide bridges follow: Cys39-Cys83 and Cys132-Cys139.

The protein belongs to the protease inhibitor I3 (leguminous Kunitz-type inhibitor) family.

Functionally, inhibition of trypsin. This chain is Trypsin inhibitor DE-3, found in Erythrina caffra (Kaffir tree).